Reading from the N-terminus, the 564-residue chain is Formate--tetrahydrofolate ligase (564 aa).

An ATP-binding site is contributed by 65 to 72; the sequence is TPLGEGKT.

Belongs to the formate--tetrahydrofolate ligase family.

The catalysed reaction is (6S)-5,6,7,8-tetrahydrofolate + formate + ATP = (6R)-10-formyltetrahydrofolate + ADP + phosphate. Its pathway is one-carbon metabolism; tetrahydrofolate interconversion. This chain is Formate--tetrahydrofolate ligase, found in Roseiflexus castenholzii (strain DSM 13941 / HLO8).